The primary structure comprises 251 residues: Hydroxyacylglutathione hydrolase (251 aa).

Zn(2+) contacts are provided by His53, His55, Asp57, His58, His110, Asp127, and His165.

This sequence belongs to the metallo-beta-lactamase superfamily. Glyoxalase II family. Monomer. It depends on Zn(2+) as a cofactor.

It carries out the reaction an S-(2-hydroxyacyl)glutathione + H2O = a 2-hydroxy carboxylate + glutathione + H(+). Its pathway is secondary metabolite metabolism; methylglyoxal degradation; (R)-lactate from methylglyoxal: step 2/2. Its function is as follows. Thiolesterase that catalyzes the hydrolysis of S-D-lactoyl-glutathione to form glutathione and D-lactic acid. The chain is Hydroxyacylglutathione hydrolase from Yersinia pestis.